The following is a 66-amino-acid chain: Large ribosomal subunit protein bL35 (66 aa).

Basic residues-rich tracts occupy residues 1-16 (MPKQ…RVKR) and 23-45 (KRGR…RQLR). Residues 1–53 (MPKQKTHRGLAKRVKRTGGGGLKRGRAFTSHRFHGKTKKQRRQLRKASMVAKG) are disordered.

The protein belongs to the bacterial ribosomal protein bL35 family.

The sequence is that of Large ribosomal subunit protein bL35 from Enterococcus faecalis (strain ATCC 700802 / V583).